Reading from the N-terminus, the 43-residue chain is uncharacterized protein (43 aa).

The chain crosses the membrane as a helical span at residues 21 to 41 (SSFALIVVLFILLIIVGAAIF).

Belongs to the SscA family.

The protein localises to the membrane. This is an uncharacterized protein from Bacillus subtilis (strain 168).